We begin with the raw amino-acid sequence, 252 residues long: Small ribosomal subunit protein uS2 (252 aa).

Serine 2 carries the post-translational modification N-acetylserine. Over residues 213–222 (QVAEETAGAA) the composition is skewed to low complexity. Positions 213–252 (QVAEETAGAATEEEEAKEEVTEEQTEATEWAEETTEAVAW) are disordered. A compositionally biased stretch (acidic residues) spans 223 to 252 (TEEEEAKEEVTEEQTEATEWAEETTEAVAW).

This sequence belongs to the universal ribosomal protein uS2 family. In terms of assembly, component of the small ribosomal subunit. Mature ribosomes consist of a small (40S) and a large (60S) subunit. The 40S subunit contains about 33 different proteins and 1 molecule of RNA (18S). The 60S subunit contains about 49 different proteins and 3 molecules of RNA (25S, 5.8S and 5S). Interacts with RPS21.

It localises to the cytoplasm. Required for the assembly and/or stability of the 40S ribosomal subunit. Required for the processing of the 20S rRNA-precursor to mature 18S rRNA in a late step of the maturation of 40S ribosomal subunits. This is Small ribosomal subunit protein uS2 from Zygosaccharomyces rouxii (strain ATCC 2623 / CBS 732 / NBRC 1130 / NCYC 568 / NRRL Y-229).